The primary structure comprises 259 residues: Envelope biogenesis factor ElyC (259 aa).

Helical transmembrane passes span 12 to 32 (MLLP…LLWF) and 39 to 59 (GKIF…QPVA).

The protein localises to the cell inner membrane. Its function is as follows. Plays a critical role in the metabolism of the essential lipid carrier used for cell wall synthesis. In Escherichia coli O157:H7, this protein is Envelope biogenesis factor ElyC (elyC).